The primary structure comprises 246 residues: Agamous-like MADS-box protein AGL5 (246 aa).

One can recognise an MADS-box domain in the interval 18-72 (RGKIEIKRIENTTNRQVTFCKRRNGLLKKAYELSVLCDAEVALVIFSTRGRLYEY). Residues 102–192 (TQYYQQEASK…RSKITERTGL (91 aa)) form the K-box domain.

Interacts with AGL15 and AGL16.

The protein localises to the nucleus. In terms of biological role, probable transcription factor. Interacts genetically with TT16/AGL32 in a partially antagonistic manner during flower development. Is essential for the coordination of cell divisions in ovule, seed coat development and endosperm formation. This Arabidopsis thaliana (Mouse-ear cress) protein is Agamous-like MADS-box protein AGL5 (AGL5).